A 2625-amino-acid polypeptide reads, in one-letter code: Highly reducing polyketide synthase frbB (2625 aa).

Residues 1–10 (MRNIDEHMSE) show a composition bias toward basic and acidic residues. A disordered region spans residues 1-25 (MRNIDEHMSERATLQSSGGYGERDS). In terms of domain architecture, Ketosynthase family 3 (KS3) spans 27-449 (VEPIAIIGMS…GTNAHVILDR (423 aa)). Active-site for beta-ketoacyl synthase activity residues include Cys-200, His-334, and His-375. Residues 563–883 (YVFSGQGAQY…DAASTLLTTI (321 aa)) are malonyl-CoA:ACP transacylase (MAT) domain. Positions 942 to 1080 (HELLGNMSTD…GRIRAVLDDS (139 aa)) are N-terminal hotdog fold. Positions 942–1252 (HELLGNMSTD…GMILAKLPGG (311 aa)) are dehydratase (DH) domain. Residues 942-1255 (HELLGNMSTD…LAKLPGGTSR (314 aa)) form the PKS/mFAS DH domain. The active-site Proton acceptor; for dehydratase activity is His-974. The C-terminal hotdog fold stretch occupies residues 1102 to 1255 (VRFVSPSAFY…LAKLPGGTSR (154 aa)). Asp-1167 (proton donor; for dehydratase activity) is an active-site residue. The segment at 1490 to 1673 (YHQIKAYIAE…GFVDTEPVFR (184 aa)) is methyltransferase (CMet) domain. Residues 1907–2220 (GLLETFHWKP…SGKHIGKVIL (314 aa)) are enoyl reductase (ER) domain. Residues 2261–2439 (AVYIVVGGLG…GYSINIGPVS (179 aa)) form a ketoreductase (KR) domain region. One can recognise a Carrier domain in the interval 2542–2619 (GAEAAVLTAI…HLARLAAEES (78 aa)). Ser-2579 carries the post-translational modification O-(pantetheine 4'-phosphoryl)serine.

It functions in the pathway antifungal biosynthesis. Functionally, highly reducing polyketide synthase; part of the gene cluster that mediates the biosynthesis of the antifungal antibiotic FR901469, an inhibitor of beta-1,3-glucansynthase, exerting antifungal activity against the pathogenes Candida albicans and Aspergillus fumigatus. FR901469 is a cyclic depsipeptide containing 12 amino acid residues and a fatty acid chain. The NRPS frbI contains 12 modules responsible for the formation of the depsipeptide backbone which is denoted as Acyl-Thr-Ala-Tyr-Val-4OHPro-Thr-Thr-3OHPro-threo3OHGln-Gly-Thr-Orn-OH (C71H116N14O23). The PKS frbB is probably involved in the production of the hydrocarbon chain, and the acyl-CoA ligase frbC might be involved in the transport of the chain to the peptide ptoduct of frbI. Because FR901469 contains 3 hydroxylated amino acid residues, the 3 oxygenases frbA, frbH, and frbJ might be participating in amino acid hydroxylation. As no thioesterase domains were detected in frbI or frbB, the thioesterases frbD and frbE may instead release and cyclize the products of the NRPS and PKS, respectively. The protein is Highly reducing polyketide synthase frbB of Dothideomycetidae sp. (strain 11243) (Fungal sp. (strain No.11243)).